The sequence spans 310 residues: Protein-L-isoaspartate O-methyltransferase (310 aa).

2 disordered regions span residues 1–44 and 67–88; these read MSGE…DKPA and AKPATAPKPTAPKPALPKPAAP. Positions 14-29 are enriched in basic and acidic residues; it reads EDLKRAPRKSEGRPGE. Over residues 32–44 the composition is skewed to low complexity; sequence AAGAVPKAADKPA. The segment covering 75–86 has biased composition (pro residues); that stretch reads PTAPKPALPKPA. Ser157 is an active-site residue.

This sequence belongs to the methyltransferase superfamily. L-isoaspartyl/D-aspartyl protein methyltransferase family.

Its subcellular location is the cytoplasm. It catalyses the reaction [protein]-L-isoaspartate + S-adenosyl-L-methionine = [protein]-L-isoaspartate alpha-methyl ester + S-adenosyl-L-homocysteine. Catalyzes the methyl esterification of L-isoaspartyl residues in peptides and proteins that result from spontaneous decomposition of normal L-aspartyl and L-asparaginyl residues. It plays a role in the repair and/or degradation of damaged proteins. This Burkholderia orbicola (strain MC0-3) protein is Protein-L-isoaspartate O-methyltransferase.